Consider the following 434-residue polypeptide: Probable glycine dehydrogenase (decarboxylating) subunit 1 (434 aa).

The protein belongs to the GcvP family. N-terminal subunit subfamily. As to quaternary structure, the glycine cleavage system is composed of four proteins: P, T, L and H. In this organism, the P 'protein' is a heterodimer of two subunits.

The enzyme catalyses N(6)-[(R)-lipoyl]-L-lysyl-[glycine-cleavage complex H protein] + glycine + H(+) = N(6)-[(R)-S(8)-aminomethyldihydrolipoyl]-L-lysyl-[glycine-cleavage complex H protein] + CO2. The glycine cleavage system catalyzes the degradation of glycine. The P protein binds the alpha-amino group of glycine through its pyridoxal phosphate cofactor; CO(2) is released and the remaining methylamine moiety is then transferred to the lipoamide cofactor of the H protein. This is Probable glycine dehydrogenase (decarboxylating) subunit 1 from Thermoplasma volcanium (strain ATCC 51530 / DSM 4299 / JCM 9571 / NBRC 15438 / GSS1).